Consider the following 708-residue polypeptide: ABC transporter G family member 18 (708 aa).

Positions 75-317 (RRRFDFSRRK…FSSFGRPIPE (243 aa)) constitute an ABC transporter domain. 109–116 (GGSGAGKS) is a binding site for ATP. The ABC transmembrane type-2 domain occupies 402-612 (AETFILAKRY…PYEAVLINEF (211 aa)). A run of 7 helical transmembrane segments spans residues 421 to 441 (LIGMRIGTVMVTGLLLATVYW), 456 to 476 (FFAFGMSTMFYCCADNIPVFI), 508 to 528 (LLALSIAFAATTFWTVGLSGG), 537 to 557 (LIIYAAFWSGSSIVTFISGLI), 560 to 580 (VMMSYMVTIAYLSYCLLLGGF), 589 to 609 (LYWIWFHYISLLKYPYEAVLI), and 681 to 701 (LWITLAWGLFFRILFYLSLLF).

The protein belongs to the ABC transporter superfamily. ABCG family. Eye pigment precursor importer (TC 3.A.1.204) subfamily.

It localises to the membrane. This Arabidopsis thaliana (Mouse-ear cress) protein is ABC transporter G family member 18 (ABCG18).